A 621-amino-acid polypeptide reads, in one-letter code: Chaperone protein HscA homolog (621 aa).

This sequence belongs to the heat shock protein 70 family.

Chaperone involved in the maturation of iron-sulfur cluster-containing proteins. Has a low intrinsic ATPase activity which is markedly stimulated by HscB. The sequence is that of Chaperone protein HscA homolog from Pseudomonas fluorescens (strain Pf0-1).